A 370-amino-acid chain; its full sequence is MRSGRYIGVMSGTSLDGVDVVLAAIDEHTVAQQASYCHPIPQDIKMAILGMCQGQAVTLSALGQLDTRLGILFAEAVLTLLKETELRAQDITAIGCHGQTVWHEPTGDAPCTLQIGDNNRVAALTGITTVGDFRRRDLAYGGQGAPLVPSFHHALLLHPVERRIVLNIGGIANLSLLVPGAPVRGYDTGPGNMLLDAWIWRHCAQPYDKDAMWAMSGQVNPLLLRRMLTDPYFALRAPKSTGREYFNLSWLERMLAGLPPMAPQDVQATLVELTAMSIAEQVLLVGGCERLLVCGGGARNPLIMTRLSALLPGIEVSTTDECGVSGDDMEALAFAWLASRTLSGLSGNLPSVTGASQETVLGAIYPVNAD.

12-19 (GTSLDGVD) serves as a coordination point for ATP.

Belongs to the anhydro-N-acetylmuramic acid kinase family.

It carries out the reaction 1,6-anhydro-N-acetyl-beta-muramate + ATP + H2O = N-acetyl-D-muramate 6-phosphate + ADP + H(+). The protein operates within amino-sugar metabolism; 1,6-anhydro-N-acetylmuramate degradation. It participates in cell wall biogenesis; peptidoglycan recycling. Its function is as follows. Catalyzes the specific phosphorylation of 1,6-anhydro-N-acetylmuramic acid (anhMurNAc) with the simultaneous cleavage of the 1,6-anhydro ring, generating MurNAc-6-P. Is required for the utilization of anhMurNAc either imported from the medium or derived from its own cell wall murein, and thus plays a role in cell wall recycling. In Pectobacterium carotovorum subsp. carotovorum (strain PC1), this protein is Anhydro-N-acetylmuramic acid kinase.